Consider the following 182-residue polypeptide: ATP synthase subunit delta (182 aa).

This sequence belongs to the ATPase delta chain family. As to quaternary structure, F-type ATPases have 2 components, F(1) - the catalytic core - and F(0) - the membrane proton channel. F(1) has five subunits: alpha(3), beta(3), gamma(1), delta(1), epsilon(1). F(0) has three main subunits: a(1), b(2) and c(10-14). The alpha and beta chains form an alternating ring which encloses part of the gamma chain. F(1) is attached to F(0) by a central stalk formed by the gamma and epsilon chains, while a peripheral stalk is formed by the delta and b chains.

Its subcellular location is the cell inner membrane. Functionally, f(1)F(0) ATP synthase produces ATP from ADP in the presence of a proton or sodium gradient. F-type ATPases consist of two structural domains, F(1) containing the extramembraneous catalytic core and F(0) containing the membrane proton channel, linked together by a central stalk and a peripheral stalk. During catalysis, ATP synthesis in the catalytic domain of F(1) is coupled via a rotary mechanism of the central stalk subunits to proton translocation. In terms of biological role, this protein is part of the stalk that links CF(0) to CF(1). It either transmits conformational changes from CF(0) to CF(1) or is implicated in proton conduction. The protein is ATP synthase subunit delta of Persephonella marina (strain DSM 14350 / EX-H1).